The following is a 683-amino-acid chain: Actin-binding LIM protein 3 (683 aa).

Met1 carries the N-acetylmethionine modification. LIM zinc-binding domains lie at Ile21 to Thr80, Thr80 to Ser140, Ser149 to Ile208, and Ile208 to Glu268. 8 positions are modified to phosphoserine: Ser277, Ser280, Ser282, Ser286, Ser290, Ser337, Ser372, and Ser373. The interval Ser372 to Ser472 is disordered. Tyr376 bears the Phosphotyrosine mark. Phosphoserine is present on residues Ser379 and Ser388. 3 stretches are compositionally biased toward polar residues: residues Pro380–Arg393, Gly406–Gln426, and Ser454–Tyr471. A phosphoserine mark is found at Ser493, Ser503, and Ser504. Phosphothreonine is present on Thr543. 3 positions are modified to phosphoserine: Ser567, Ser576, and Ser607. Positions Met615–Phe683 constitute an HP domain. An Omega-N-methylarginine modification is found at Arg631.

As to quaternary structure, directly interacts with F-actin and ABRA. Expressed predominantly in heart and brain.

The protein resides in the cytoplasm. Functionally, may act as scaffold protein. May stimulate ABRA activity and ABRA-dependent SRF transcriptional activity. The polypeptide is Actin-binding LIM protein 3 (ABLIM3) (Homo sapiens (Human)).